A 1101-amino-acid polypeptide reads, in one-letter code: ATP-dependent DNA helicase mph1 (1101 aa).

4 disordered regions span residues 22 to 59 (PGTS…SPDR), 95 to 138 (LTQP…QYHD), 154 to 231 (FEEE…TNRP), and 250 to 270 (SSQR…PTHH). The span at 24-48 (TSDTVESVQTNNRPAKQSDISISQG) shows a compositional bias: polar residues. A compositionally biased stretch (low complexity) spans 170–190 (TPARTAAAPCAAPKGTAADVP). Positions 191–202 (FDLDDIPDDAFD) are enriched in acidic residues. Over residues 209-228 (PPRSTSQATRGPPVQSQFRT) the composition is skewed to polar residues. A Helicase ATP-binding domain is found at 296 to 464 (IAQRGLFHNL…AIIDDLGIAK (169 aa)). ATP is bound at residue 309–316 (LPTGLGKT). A DEAH box motif is present at residues 412 to 415 (DEAH). The 175-residue stretch at 634 to 808 (YLKQVVLNHF…GTRFTFHDDK (175 aa)) folds into the Helicase C-terminal domain. Disordered stretches follow at residues 824-890 (RQID…PTPE) and 991-1067 (SRDP…QDAF). Residues 842–854 (RRARPPKRPPKKF) show a composition bias toward basic residues.

Belongs to the DEAD box helicase family. DEAH subfamily. FANCM sub-subfamily. As to quaternary structure, interacts with the MHF histone-fold complex to form the FANCM-MHF complex.

It is found in the nucleus. The catalysed reaction is ATP + H2O = ADP + phosphate + H(+). ATP-dependent DNA helicase involved in DNA damage repair by homologous recombination and in genome maintenance. Capable of unwinding D-loops. Plays a role in limiting crossover recombinants during mitotic DNA double-strand break (DSB) repair. Component of a FANCM-MHF complex which promotes gene conversion at blocked replication forks, probably by reversal of the stalled fork. In Aspergillus fumigatus (strain CBS 144.89 / FGSC A1163 / CEA10) (Neosartorya fumigata), this protein is ATP-dependent DNA helicase mph1.